The primary structure comprises 1002 residues: UPF0182 protein alr1037 (1002 aa).

The next 9 membrane-spanning stretches (helical) occupy residues 7–29 (FRLS…LGAE), 49–71 (RGVL…LALA), 123–145 (LRWL…VHYG), 178–200 (QVFS…LIYS), 202–224 (FFLR…YNWA), 258–280 (LLEL…TYLL), 300–319 (HLYG…YWLS), 339–361 (VVVQ…FYLL), and 382–404 (GAYL…YLIV).

This sequence belongs to the UPF0182 family.

It localises to the cell membrane. The chain is UPF0182 protein alr1037 from Nostoc sp. (strain PCC 7120 / SAG 25.82 / UTEX 2576).